Reading from the N-terminus, the 349-residue chain is Ion-translocating oxidoreductase complex subunit D (349 aa).

3 helical membrane passes run 36–56 (CAFF…VALS), 77–99 (SAML…WMIV), and 124–144 (AMAA…SWIA). Threonine 185 carries the FMN phosphoryl threonine modification. Transmembrane regions (helical) follow at residues 212 to 232 (GTGV…LVLL), 239 to 259 (WHIS…GFLL), 265 to 285 (ASPL…FIAT), 291 to 311 (ATSP…VYII), and 315 to 335 (GGYP…APFI).

This sequence belongs to the NqrB/RnfD family. As to quaternary structure, the complex is composed of six subunits: RnfA, RnfB, RnfC, RnfD, RnfE and RnfG. FMN serves as cofactor.

The protein resides in the cell inner membrane. In terms of biological role, part of a membrane-bound complex that couples electron transfer with translocation of ions across the membrane. In Shewanella sp. (strain ANA-3), this protein is Ion-translocating oxidoreductase complex subunit D.